The primary structure comprises 2329 residues: Pre-mRNA-splicing factor 8 homolog (2329 aa).

The disordered stretch occupies residues 1 to 53 (MANYGGHPQTEPHAIPDSILEEKSRKWKQLQGKRYSEKKKFGMSDTQKEEMPP). The segment covering 34–53 (RYSEKKKFGMSDTQKEEMPP) has biased composition (basic and acidic residues). The reverse transcriptase homology domain stretch occupies residues 804-1295 (TTVHWLESRR…KIQTRIKIGL (492 aa)). Residues 1296–1570 (NSKMPSRFPP…TLKISLIQIF (275 aa)) are linker. The interval 1506–1519 (MKFKKLTNAQRSGL) is important for branch point selection. The segment at 1574-1745 (LWQKIHESVV…LRERIRKGLQ (172 aa)) is restriction endonuclease homology domain. Residues 1760–2013 (NYGELFSNQI…ILGMEISAPS (254 aa)) are RNase H homology domain. Residues 2096–2227 (TYILPKNILK…LTAYKLTPSG (132 aa)) enclose the MPN domain.

As to quaternary structure, part of the U5 snRNP complex and of the U4/U6-U5 tri-snRNP complex.

It localises to the nucleus. Functions as a scaffold that mediates the ordered assembly of spliceosomal proteins and snRNAs. Required for the assembly of the U4/U6-U5 tri-snRNP complex. Functions as a scaffold that positions spliceosomal U2, U5 and U6 snRNAs at splice sites on pre-mRNA substrates, so that splicing can occur. Interacts with both the 5' and the 3' splice site. In Caenorhabditis elegans, this protein is Pre-mRNA-splicing factor 8 homolog (prp-8).